The primary structure comprises 456 residues: Cobyrinate a,c-diamide synthase (456 aa).

Residues 247–439 (PIAIARDRAF…LHLHFGGKPW (193 aa)) enclose the GATase cobBQ-type domain. Residue cysteine 330 is the Nucleophile of the active site.

It belongs to the CobB/CbiA family. Mg(2+) is required as a cofactor.

It catalyses the reaction cob(II)yrinate + 2 L-glutamine + 2 ATP + 2 H2O = cob(II)yrinate a,c diamide + 2 L-glutamate + 2 ADP + 2 phosphate + 2 H(+). It participates in cofactor biosynthesis; adenosylcobalamin biosynthesis; cob(II)yrinate a,c-diamide from sirohydrochlorin (anaerobic route): step 10/10. In terms of biological role, catalyzes the ATP-dependent amidation of the two carboxylate groups at positions a and c of cobyrinate, using either L-glutamine or ammonia as the nitrogen source. This Synechococcus sp. (strain ATCC 27144 / PCC 6301 / SAUG 1402/1) (Anacystis nidulans) protein is Cobyrinate a,c-diamide synthase.